Here is a 308-residue protein sequence, read N- to C-terminus: Ribosomal RNA small subunit methyltransferase H (308 aa).

Residues 34 to 36 (GGH), Asp-54, Phe-80, Asp-101, and Gln-108 contribute to the S-adenosyl-L-methionine site.

It belongs to the methyltransferase superfamily. RsmH family.

It is found in the cytoplasm. It carries out the reaction cytidine(1402) in 16S rRNA + S-adenosyl-L-methionine = N(4)-methylcytidine(1402) in 16S rRNA + S-adenosyl-L-homocysteine + H(+). Specifically methylates the N4 position of cytidine in position 1402 (C1402) of 16S rRNA. In Ureaplasma parvum serovar 3 (strain ATCC 27815 / 27 / NCTC 11736), this protein is Ribosomal RNA small subunit methyltransferase H.